A 477-amino-acid polypeptide reads, in one-letter code: Glycogen synthase (477 aa).

Lysine 15 lines the ADP-alpha-D-glucose pocket.

This sequence belongs to the glycosyltransferase 1 family. Bacterial/plant glycogen synthase subfamily.

The enzyme catalyses [(1-&gt;4)-alpha-D-glucosyl](n) + ADP-alpha-D-glucose = [(1-&gt;4)-alpha-D-glucosyl](n+1) + ADP + H(+). It functions in the pathway glycan biosynthesis; glycogen biosynthesis. Synthesizes alpha-1,4-glucan chains using ADP-glucose. This chain is Glycogen synthase, found in Mannheimia succiniciproducens (strain KCTC 0769BP / MBEL55E).